A 284-amino-acid polypeptide reads, in one-letter code: Four and a half LIM domains protein 5 (284 aa).

The segment at 8–32 adopts a C4-type zinc-finger fold; the sequence is CQYCTASLLGKKYVLKDDNLYCISC. 4 LIM zinc-binding domains span residues 39–100, 101–160, 161–220, and 221–283; these read NYCE…ECSS, KCFH…KEFA, HYCN…LYAK, and KCAA…ADTD.

In terms of assembly, interacts with CREM (via the third LIM domain). Interacts (via second LIM domain) with SPAG8.

It is found in the nucleus. May be involved in the regulation of spermatogenesis. Stimulates CREM transcriptional activity in a phosphorylation-independent manner. The chain is Four and a half LIM domains protein 5 (Fhl5) from Rattus norvegicus (Rat).